The sequence spans 570 residues: Sulfite reductase [NADPH] hemoprotein beta-component (570 aa).

[4Fe-4S] cluster is bound by residues C434, C440, C479, and C483. A siroheme-binding site is contributed by C483.

Belongs to the nitrite and sulfite reductase 4Fe-4S domain family. In terms of assembly, alpha(8)-beta(8). The alpha component is a flavoprotein, the beta component is a hemoprotein. Requires siroheme as cofactor. It depends on [4Fe-4S] cluster as a cofactor.

The catalysed reaction is hydrogen sulfide + 3 NADP(+) + 3 H2O = sulfite + 3 NADPH + 4 H(+). It functions in the pathway sulfur metabolism; hydrogen sulfide biosynthesis; hydrogen sulfide from sulfite (NADPH route): step 1/1. Its function is as follows. Component of the sulfite reductase complex that catalyzes the 6-electron reduction of sulfite to sulfide. This is one of several activities required for the biosynthesis of L-cysteine from sulfate. The sequence is that of Sulfite reductase [NADPH] hemoprotein beta-component from Escherichia coli (strain ATCC 8739 / DSM 1576 / NBRC 3972 / NCIMB 8545 / WDCM 00012 / Crooks).